Reading from the N-terminus, the 295-residue chain is Shikimate dehydrogenase (NADP(+)) (295 aa).

Residues 24 to 26 and Thr-71 contribute to the shikimate site; that span reads SRS. Lys-75 functions as the Proton acceptor in the catalytic mechanism. Residue Glu-87 participates in NADP(+) binding. Residues Asn-96 and Asp-111 each coordinate shikimate. Residues 136–140, 160–165, and Met-233 contribute to the NADP(+) site; these read GAGGA and NRTASR. Tyr-235 serves as a coordination point for shikimate. Residue Gly-256 participates in NADP(+) binding.

Belongs to the shikimate dehydrogenase family. Homodimer.

The catalysed reaction is shikimate + NADP(+) = 3-dehydroshikimate + NADPH + H(+). The protein operates within metabolic intermediate biosynthesis; chorismate biosynthesis; chorismate from D-erythrose 4-phosphate and phosphoenolpyruvate: step 4/7. Involved in the biosynthesis of the chorismate, which leads to the biosynthesis of aromatic amino acids. Catalyzes the reversible NADPH linked reduction of 3-dehydroshikimate (DHSA) to yield shikimate (SA). This chain is Shikimate dehydrogenase (NADP(+)), found in Cupriavidus necator (strain ATCC 17699 / DSM 428 / KCTC 22496 / NCIMB 10442 / H16 / Stanier 337) (Ralstonia eutropha).